The chain runs to 137 residues: Phosphoinositide-interacting protein (137 aa).

The next 2 membrane-spanning stretches (helical) occupy residues 56 to 76 (IVIM…TCLA) and 94 to 114 (PGFL…VPII).

In terms of assembly, interacts with TRPV1.

The protein localises to the membrane. In terms of biological role, regulatory subunit of TRPV1, a molecular sensor of noxious heat and capsaicin. Positively regulates TRPV1 channel activity via phosphatidylinositol 4,5-bisphosphate (PIP2). Binds various phosphoinositide, including phosphatidylinositol 4,5-bisphosphate (PIP2), but not phosphatidylinositol (PI). This is Phosphoinositide-interacting protein (PIRT) from Homo sapiens (Human).